A 642-amino-acid chain; its full sequence is Threonine--tRNA ligase (642 aa).

Residues 1–61 enclose the TGS domain; that stretch reads MPVITLPDGS…ETDAELSIIT (61 aa). Positions 243-534 are catalytic; it reads DHRKIGKQLD…LIEEYAGRFP (292 aa). Zn(2+) contacts are provided by Cys334, His385, and His511.

The protein belongs to the class-II aminoacyl-tRNA synthetase family. Homodimer. Zn(2+) serves as cofactor.

It localises to the cytoplasm. The catalysed reaction is tRNA(Thr) + L-threonine + ATP = L-threonyl-tRNA(Thr) + AMP + diphosphate + H(+). Catalyzes the attachment of threonine to tRNA(Thr) in a two-step reaction: L-threonine is first activated by ATP to form Thr-AMP and then transferred to the acceptor end of tRNA(Thr). Also edits incorrectly charged L-seryl-tRNA(Thr). This Shewanella putrefaciens (strain CN-32 / ATCC BAA-453) protein is Threonine--tRNA ligase.